The sequence spans 346 residues: NADH-ubiquinone oxidoreductase chain 2 (346 aa).

Helical transmembrane passes span 1–21, 26–46, 60–80, 96–116, 122–142, 151–171, 178–198, 199–219, 242–262, 274–294, and 320–340; these read MSPY…MLIS, WVFM…ILVW, FIVQ…SLSG, MMIM…YWVV, LNYI…LAVL, SSML…GGLG, LLAF…VAGS, LLGL…FSIL, VLLG…GFFG, LLLG…FYYL, and LSGL…LVGG.

It belongs to the complex I subunit 2 family.

It is found in the mitochondrion inner membrane. The catalysed reaction is a ubiquinone + NADH + 5 H(+)(in) = a ubiquinol + NAD(+) + 4 H(+)(out). Core subunit of the mitochondrial membrane respiratory chain NADH dehydrogenase (Complex I) that is believed to belong to the minimal assembly required for catalysis. Complex I functions in the transfer of electrons from NADH to the respiratory chain. The immediate electron acceptor for the enzyme is believed to be ubiquinone. This Branchiostoma lanceolatum (Common lancelet) protein is NADH-ubiquinone oxidoreductase chain 2 (ND2).